Here is a 412-residue protein sequence, read N- to C-terminus: G-protein coupled receptor homolog UL33 (412 aa).

Residues 1–29 (MDTIIHNSTRNNTPPHINDTCNMTGPLFA) are Virion surface-facing. Asn7, Asn18, and Asn22 each carry an N-linked (GlcNAc...) asparagine; by host glycan. A helical transmembrane segment spans residues 30 to 54 (IRTTEAVLNTFIIFVGGPLNAIVLI). The Intravirion portion of the chain corresponds to 55–70 (TQLLTNRVLGYSTPTI). Residues 71 to 95 (YMTNLYSTNFLTLTVLPFIVLSNQW) form a helical membrane-spanning segment. Topologically, residues 96-102 (LLPAGVA) are virion surface. Residues 103 to 129 (SCKFLSVIYYSSCTVGFATVALIAADR) form a helical membrane-spanning segment. A disulfide bridge links Cys104 with Cys188. Residues 130–138 (YRVLHKRTY) lie on the Intravirion side of the membrane. The helical transmembrane segment at 139–160 (ARQSYRSTYMILLLTWLAGLIF) threads the bilayer. Over 161–203 (SVPAAVYTTVVMHHDANDTNNTNGHATCVLYFVAEEVHTVLLS) the chain is Virion surface. Asn177 and Asn180 each carry an N-linked (GlcNAc...) asparagine; by host glycan. The chain crosses the membrane as a helical span at residues 204 to 224 (WKVLLTMVWGAAPVIMMTWFY). Residues 225–240 (AFFYSTVQRTSQKQRS) are Intravirion-facing. The chain crosses the membrane as a helical span at residues 241–267 (RTLTFVSVLLISFVALQTPYVSLMIFN). Residues 268 to 281 (SYATTAWPMQCEHL) are Virion surface-facing. The chain crosses the membrane as a helical span at residues 282–305 (TLRRTIGTLARVVPHLHCLINPIL). At 306–412 (YALLGHDFLQ…SQSHHNLSGV (107 aa)) the chain is on the intravirion side. Residues 377–412 (NFPSGTWKGGQKTASNDTSTKIPHRLSQSHHNLSGV) form a disordered region. Polar residues predominate over residues 388 to 397 (KTASNDTSTK).

Belongs to the G-protein coupled receptor 1 family. Heterodimerizes with US28.

The protein resides in the virion. It localises to the host cell membrane. Its subcellular location is the host cytoplasm. In terms of biological role, G-protein-coupled receptor (vGPCR) that constitutively activates multiple oncogenic signaling pathways including STAT3, AP-1, phospholipase C, NF-kappa-B or cAMP-responsive element (CRE) pathways. Plays an important role in viral reactivation from latency through activation of host CREB1, facilitating its recruitment to the viral major immediate early (MIE) genes. In turn, expression of the MIE-driven genes such as UL123 are de-repressed. Also facilitates virus dissemination via the extracellular and cell-to-cell route. This is G-protein coupled receptor homolog UL33 (UL33) from Human cytomegalovirus (strain AD169) (HHV-5).